Reading from the N-terminus, the 325-residue chain is Serine/threonine-protein kinase CtkA (325 aa).

Residues 21–24 (NGNK), lysine 37, glutamine 72, and 88–90 (KDF) each bind ATP. Mg(2+) is bound by residues asparagine 160 and aspartate 179. Aspartate 179 is a binding site for ATP. The tract at residues 296-325 (QHKQAHSNPYDNADDLDNSNEYTPTPKRRR) is disordered.

Post-translationally, autophosphorylates on either Thr-3 or Thr-7.

The protein resides in the secreted. It localises to the host cytoplasm. It is found in the host cytosol. Its subcellular location is the host nucleus. It catalyses the reaction L-seryl-[protein] + ATP = O-phospho-L-seryl-[protein] + ADP + H(+). The enzyme catalyses L-threonyl-[protein] + ATP = O-phospho-L-threonyl-[protein] + ADP + H(+). In terms of biological role, virulence factor acting as a pro-inflammatory protein that induces the secretion of the pro-inflammatory cytokines TNF-alpha (tumor necrosis factor-alpha) and IL-8 (interleukin-8) from human macrophages, as well as enhanced translocation of the transcription factor NF-kappa-B complex in macrophages. Is a kinase capable of autophosphorylating itself at a threonine residue near the N-terminus. Also leads to enhanced phosphorylation of the NF-kappa-B p65 subunit (RELA) at 'Ser-276' in human epithelial cancer cells; its kinase activity is required for this enhanced phosphorylation that up-regulates NF-kappa-B activity, but it does not directly phosphorylate this protein. Thus, the kinase activity of CtkA may play an important role in the induction of host inflammatory responses during H.pylori infection. This Helicobacter pylori (strain J99 / ATCC 700824) (Campylobacter pylori J99) protein is Serine/threonine-protein kinase CtkA (ctkA).